The following is a 283-amino-acid chain: 5'-nucleotidase SurE (283 aa).

Positions 14, 15, 47, and 105 each coordinate a divalent metal cation.

The protein belongs to the SurE nucleotidase family. Requires a divalent metal cation as cofactor.

Its subcellular location is the cytoplasm. It catalyses the reaction a ribonucleoside 5'-phosphate + H2O = a ribonucleoside + phosphate. Nucleotidase that shows phosphatase activity on nucleoside 5'-monophosphates. In Chlamydia trachomatis serovar D (strain ATCC VR-885 / DSM 19411 / UW-3/Cx), this protein is 5'-nucleotidase SurE.